The primary structure comprises 320 residues: MQTRNTFSWIKEEITRSISVSLMIYIITGASISNAYPIFAQQGYENPREATGRIVCANCHLANKPVDIEVPQAVLPDTVFEAVVRIPYDMQLKQVLANGKKGALNVGAVLILPEGFELAPPDRISPEMKEKIGNLSFQNYRPTKKNILVIGPVPGKKYSEITFPILSPDPASNKDAHFLKYPIYVGGNRGRGQIYPDGNKSNNTVYNATATGIVSKIIRKEKGGYEITITDALDGHQVVDIIPPGPELLVSEGESIKLDQPLTINPNVGGFGQGDAEIVLQDPLRVQGLLFFLASIVFAQIFLVLKKKQFEKVQVSEMNF.

The signal sequence occupies residues 1 to 35; sequence MQTRNTFSWIKEEITRSISVSLMIYIITGASISNA. The heme site is built by Tyr36, Cys56, Cys59, and His60. A helical membrane pass occupies residues 286–306; sequence VQGLLFFLASIVFAQIFLVLK.

It belongs to the cytochrome f family. In terms of assembly, the 4 large subunits of the cytochrome b6-f complex are cytochrome b6, subunit IV (17 kDa polypeptide, petD), cytochrome f and the Rieske protein, while the 4 small subunits are PetG, PetL, PetM and PetN. The complex functions as a dimer. Requires heme as cofactor.

The protein localises to the plastid. It is found in the chloroplast thylakoid membrane. Component of the cytochrome b6-f complex, which mediates electron transfer between photosystem II (PSII) and photosystem I (PSI), cyclic electron flow around PSI, and state transitions. This Gossypium hirsutum (Upland cotton) protein is Cytochrome f.